Consider the following 714-residue polypeptide: Cyclomaltodextrin glucanotransferase (714 aa).

The N-terminal stretch at 1-27 (MKSRYKRLTSLALSLSMALGISLPAWA) is a signal peptide. An A1 region spans residues 28–165 (SPDTSVDNKV…NIKVVIDFAP (138 aa)). Positions 54, 59, 60, 78, and 80 each coordinate Ca(2+). Position 127–128 (127–128 (YW)) interacts with substrate. Ca(2+) is bound at residue asparagine 166. Positions 166 to 229 (NHTSPADRDN…NLYDLADINH (64 aa)) are b. Histidine 167 is a binding site for substrate. Ca(2+) is bound at residue isoleucine 217. 220–223 (NLYD) serves as a coordination point for substrate. Residue aspartate 226 coordinates Ca(2+). The interval 230 to 434 (NNNAMDAYFK…LRKSNPAIAY (205 aa)) is A2. Arginine 254 serves as a coordination point for substrate. Residue aspartate 256 is the Nucleophile of the active site. 259–260 (KH) contacts substrate. Histidine 260 provides a ligand contact to Ca(2+). The active-site Proton donor is glutamate 285. Residues histidine 355, aspartate 399, and arginine 403 each contribute to the substrate site. The segment at 435–523 (GTTTERWVNN…GTAVWQYTAP (89 aa)) is c. The d stretch occupies residues 524–610 (ETSPAIGNVG…SNTFKSFNVL (87 aa)). The IPT/TIG domain occupies 527 to 607 (PAIGNVGPTM…GTASNTFKSF (81 aa)). Positions 609 to 714 (VLTGDQVTVR…VGTVTVDWQN (106 aa)) constitute a CBM20 domain. The interval 611-714 (TGDQVTVRFL…VGTVTVDWQN (104 aa)) is e.

It belongs to the glycosyl hydrolase 13 family. As to quaternary structure, monomer. The cofactor is Ca(2+).

Its subcellular location is the secreted. It catalyses the reaction Cyclizes part of a (1-&gt;4)-alpha-D-glucan chain by formation of a (1-&gt;4)-alpha-D-glucosidic bond.. This is Cyclomaltodextrin glucanotransferase (cgtM) from Paenibacillus macerans (Bacillus macerans).